The following is a 70-amino-acid chain: Conotoxin TxMMSK-02 (70 aa).

A signal peptide spans 1–20 (MMSKLGALLTICLLLFSLTA). A propeptide spanning residues 21 to 53 (VPLDGDQHADQPAQRLQDRIPTEDHPLFDPNKR) is cleaved from the precursor. 3 disulfide bridges follow: C54–C68, C55–C64, and C60–C67. P66 carries the post-translational modification 4-hydroxyproline. At Y69 the chain carries Tyrosine amide.

This sequence belongs to the conotoxin M superfamily. Expressed by the venom duct.

The protein localises to the secreted. The sequence is that of Conotoxin TxMMSK-02 from Conus textile (Cloth-of-gold cone).